Reading from the N-terminus, the 176-residue chain is Ribosome maturation factor RimM (176 aa).

The 75-residue stretch at glutamate 95–leucine 169 folds into the PRC barrel domain.

Belongs to the RimM family. Binds ribosomal protein uS19.

It localises to the cytoplasm. An accessory protein needed during the final step in the assembly of 30S ribosomal subunit, possibly for assembly of the head region. Essential for efficient processing of 16S rRNA. May be needed both before and after RbfA during the maturation of 16S rRNA. It has affinity for free ribosomal 30S subunits but not for 70S ribosomes. In Nitratidesulfovibrio vulgaris (strain ATCC 29579 / DSM 644 / CCUG 34227 / NCIMB 8303 / VKM B-1760 / Hildenborough) (Desulfovibrio vulgaris), this protein is Ribosome maturation factor RimM.